Reading from the N-terminus, the 364-residue chain is Isopentenyl-diphosphate delta-isomerase (364 aa).

Positions 1 to 13 (MSSAQRKDDHVRL) are enriched in basic and acidic residues. A disordered region spans residues 1–24 (MSSAQRKDDHVRLATEQQRAHSGR). Position 6–7 (6–7 (RK)) interacts with substrate. Residues 64–66 (AMT), serine 94, and asparagine 123 each bind FMN. 94–96 (SMH) is a substrate binding site. Position 153 (glutamine 153) interacts with substrate. Residue glutamate 154 coordinates Mg(2+). FMN-binding positions include lysine 185, serine 210, threonine 215, 259–261 (GIR), and 280–281 (SG).

Belongs to the IPP isomerase type 2 family. Homooctamer. Dimer of tetramers. It depends on FMN as a cofactor. The cofactor is NADPH. Mg(2+) is required as a cofactor.

Its subcellular location is the cytoplasm. It carries out the reaction isopentenyl diphosphate = dimethylallyl diphosphate. Functionally, involved in the biosynthesis of isoprenoids. Catalyzes the 1,3-allylic rearrangement of the homoallylic substrate isopentenyl (IPP) to its allylic isomer, dimethylallyl diphosphate (DMAPP). The chain is Isopentenyl-diphosphate delta-isomerase from Kitasatospora griseola (Streptomyces griseolosporeus).